Consider the following 82-residue polypeptide: ATP synthase subunit c (82 aa).

Helical transmembrane passes span 6–26 and 57–77; these read AAASVIAAALAVGLAAIGPGI and LAFMESLTIYGLLVSIVLLFA.

The protein belongs to the ATPase C chain family. As to quaternary structure, F-type ATPases have 2 components, F(1) - the catalytic core - and F(0) - the membrane proton channel. F(1) has five subunits: alpha(3), beta(3), gamma(1), delta(1), epsilon(1). F(0) has four main subunits: a(1), b(1), b'(1) and c(10-14). The alpha and beta chains form an alternating ring which encloses part of the gamma chain. F(1) is attached to F(0) by a central stalk formed by the gamma and epsilon chains, while a peripheral stalk is formed by the delta, b and b' chains.

It localises to the cell inner membrane. In terms of biological role, f(1)F(0) ATP synthase produces ATP from ADP in the presence of a proton or sodium gradient. F-type ATPases consist of two structural domains, F(1) containing the extramembraneous catalytic core and F(0) containing the membrane proton channel, linked together by a central stalk and a peripheral stalk. During catalysis, ATP synthesis in the catalytic domain of F(1) is coupled via a rotary mechanism of the central stalk subunits to proton translocation. Functionally, key component of the F(0) channel; it plays a direct role in translocation across the membrane. A homomeric c-ring of between 10-14 subunits forms the central stalk rotor element with the F(1) delta and epsilon subunits. This chain is ATP synthase subunit c, found in Gloeobacter violaceus (strain ATCC 29082 / PCC 7421).